A 132-amino-acid polypeptide reads, in one-letter code: Small ribosomal subunit protein uS8 (132 aa).

It belongs to the universal ribosomal protein uS8 family. As to quaternary structure, part of the 30S ribosomal subunit. Contacts proteins S5 and S12.

In terms of biological role, one of the primary rRNA binding proteins, it binds directly to 16S rRNA central domain where it helps coordinate assembly of the platform of the 30S subunit. The sequence is that of Small ribosomal subunit protein uS8 from Lacticaseibacillus casei (strain BL23) (Lactobacillus casei).